Reading from the N-terminus, the 195-residue chain is Probable DNA-directed RNA polymerase subunit delta (195 aa).

Residues 14–81 enclose the HTH HARE-type domain; the sequence is LSMIEVAHAI…GDNTWGLRAW (68 aa). The tract at residues 91–195 is disordered; sequence TVGETEDEED…DEEDKEDDEE (105 aa). 2 stretches are compositionally biased toward acidic residues: residues 116–171 and 179–195; these read TDDD…EDQL and FGDD…DDEE.

This sequence belongs to the RpoE family. In terms of assembly, RNAP is composed of a core of 2 alpha, a beta and a beta' subunits. The core is associated with a delta subunit and one of several sigma factors.

In terms of biological role, participates in both the initiation and recycling phases of transcription. In the presence of the delta subunit, RNAP displays an increased specificity of transcription, a decreased affinity for nucleic acids, and an increased efficiency of RNA synthesis because of enhanced recycling. This chain is Probable DNA-directed RNA polymerase subunit delta, found in Limosilactobacillus fermentum (strain NBRC 3956 / LMG 18251) (Lactobacillus fermentum).